Here is a 302-residue protein sequence, read N- to C-terminus: Sulfate adenylyltransferase subunit 2 (302 aa).

Belongs to the PAPS reductase family. CysD subfamily. Heterodimer composed of CysD, the smaller subunit, and CysN.

It carries out the reaction sulfate + ATP + H(+) = adenosine 5'-phosphosulfate + diphosphate. Its pathway is sulfur metabolism; hydrogen sulfide biosynthesis; sulfite from sulfate: step 1/3. Functionally, with CysN forms the ATP sulfurylase (ATPS) that catalyzes the adenylation of sulfate producing adenosine 5'-phosphosulfate (APS) and diphosphate, the first enzymatic step in sulfur assimilation pathway. APS synthesis involves the formation of a high-energy phosphoric-sulfuric acid anhydride bond driven by GTP hydrolysis by CysN coupled to ATP hydrolysis by CysD. In Shigella boydii serotype 4 (strain Sb227), this protein is Sulfate adenylyltransferase subunit 2.